We begin with the raw amino-acid sequence, 335 residues long: Glyceraldehyde-3-phosphate dehydrogenase 2 (335 aa).

NAD(+)-binding positions include 13–14 (RI), D35, and R80. 2 positions are modified to phosphoserine: S125 and S151. 151–153 (SCT) is a binding site for D-glyceraldehyde 3-phosphate. C152 functions as the Nucleophile in the catalytic mechanism. T153, T154, T182, and T184 each carry phosphothreonine. T182 contributes to the D-glyceraldehyde 3-phosphate binding site. Residues S192, S203, and S209 each carry the phosphoserine modification. Position 211 is a phosphothreonine (T211). D-glyceraldehyde 3-phosphate-binding positions include 211-212 (TG) and R234. T237 is subject to Phosphothreonine. S241 carries the phosphoserine modification. N316 contacts NAD(+).

This sequence belongs to the glyceraldehyde-3-phosphate dehydrogenase family. As to quaternary structure, homotetramer.

The protein localises to the cytoplasm. The catalysed reaction is D-glyceraldehyde 3-phosphate + phosphate + NAD(+) = (2R)-3-phospho-glyceroyl phosphate + NADH + H(+). It participates in carbohydrate degradation; glycolysis; pyruvate from D-glyceraldehyde 3-phosphate: step 1/5. The sequence is that of Glyceraldehyde-3-phosphate dehydrogenase 2 (gpd3) from Schizosaccharomyces pombe (strain 972 / ATCC 24843) (Fission yeast).